A 335-amino-acid chain; its full sequence is Nucleoid-associated protein YejK (335 aa).

It belongs to the YejK family.

The protein resides in the cytoplasm. It localises to the nucleoid. The chain is Nucleoid-associated protein YejK from Escherichia coli (strain K12 / MC4100 / BW2952).